The following is a 122-amino-acid chain: Large ribosomal subunit protein uL14c (122 aa).

This sequence belongs to the universal ribosomal protein uL14 family. In terms of assembly, part of the 50S ribosomal subunit.

Its subcellular location is the plastid. It localises to the chloroplast. Functionally, binds to 23S rRNA. In Nicotiana sylvestris (Wood tobacco), this protein is Large ribosomal subunit protein uL14c.